The primary structure comprises 228 residues: Uracil-DNA glycosylase (228 aa).

Catalysis depends on aspartate 64, which acts as the Proton acceptor.

Belongs to the uracil-DNA glycosylase (UDG) superfamily. UNG family.

Its subcellular location is the cytoplasm. The catalysed reaction is Hydrolyzes single-stranded DNA or mismatched double-stranded DNA and polynucleotides, releasing free uracil.. In terms of biological role, excises uracil residues from the DNA which can arise as a result of misincorporation of dUMP residues by DNA polymerase or due to deamination of cytosine. In Yersinia pseudotuberculosis serotype O:1b (strain IP 31758), this protein is Uracil-DNA glycosylase.